Consider the following 232-residue polypeptide: Large ribosomal subunit protein uL1 (232 aa).

It belongs to the universal ribosomal protein uL1 family. As to quaternary structure, part of the 50S ribosomal subunit.

Its function is as follows. Binds directly to 23S rRNA. The L1 stalk is quite mobile in the ribosome, and is involved in E site tRNA release. In terms of biological role, protein L1 is also a translational repressor protein, it controls the translation of the L11 operon by binding to its mRNA. This is Large ribosomal subunit protein uL1 from Parabacteroides distasonis (strain ATCC 8503 / DSM 20701 / CIP 104284 / JCM 5825 / NCTC 11152).